A 143-amino-acid polypeptide reads, in one-letter code: Large ribosomal subunit protein uL15 (143 aa).

Basic residues-rich tracts occupy residues 1-13 (MIRKSKKITKMRG) and 23-38 (KKHRGAGHRGGRGNAG). The disordered stretch occupies residues 1–38 (MIRKSKKITKMRGSRTCGYGEAKKHRGAGHRGGRGNAG).

This sequence belongs to the universal ribosomal protein uL15 family. Part of the 50S ribosomal subunit.

Functionally, binds to the 23S rRNA. This is Large ribosomal subunit protein uL15 from Methanococcus maripaludis (strain C5 / ATCC BAA-1333).